The following is a 91-amino-acid chain: Probable Fe(2+)-trafficking protein (91 aa).

It belongs to the Fe(2+)-trafficking protein family.

In terms of biological role, could be a mediator in iron transactions between iron acquisition and iron-requiring processes, such as synthesis and/or repair of Fe-S clusters in biosynthetic enzymes. This Paraburkholderia phymatum (strain DSM 17167 / CIP 108236 / LMG 21445 / STM815) (Burkholderia phymatum) protein is Probable Fe(2+)-trafficking protein.